An 83-amino-acid polypeptide reads, in one-letter code: Small ribosomal subunit protein bS16 (83 aa).

The protein belongs to the bacterial ribosomal protein bS16 family.

This is Small ribosomal subunit protein bS16 from Syntrophus aciditrophicus (strain SB).